Reading from the N-terminus, the 86-residue chain is DNA-directed RNA polymerase subunit Rpo6 (86 aa).

Belongs to the archaeal Rpo6/eukaryotic RPB6 RNA polymerase subunit family. As to quaternary structure, part of the RNA polymerase complex.

It localises to the cytoplasm. It catalyses the reaction RNA(n) + a ribonucleoside 5'-triphosphate = RNA(n+1) + diphosphate. Functionally, DNA-dependent RNA polymerase (RNAP) catalyzes the transcription of DNA into RNA using the four ribonucleoside triphosphates as substrates. The sequence is that of DNA-directed RNA polymerase subunit Rpo6 from Sulfurisphaera tokodaii (strain DSM 16993 / JCM 10545 / NBRC 100140 / 7) (Sulfolobus tokodaii).